The sequence spans 330 residues: MSQIVVCAMYKFVTLEDYEAMRQPLLDTMIKNNVKGTLLLANEGINGTVAGSREGVNALLAYLKSDSRLADIDYKESYHQEMPFYRSKVKLKKEIVTLGIEEIDPNKVCGKYVEPKDWNALISDPETILVDTRNDYEIEIGTFKNAINPSTETFREFPEYVDKNLDPKKHKKVAMFCTGGIRCEKSTALMKAKGFDEVYHLKGGILKYLEEVPKEESMWEGECFVFDSRVAVNHDLEKGSYDQCFACRMPITEEDKKRPEYVKGISCHHCYDKVTEEQKARFAEREKQSQLAAERGFSHVGDDAKKLAKLNKQQKQQAKEIARKKAKSEI.

The region spanning 123 to 217 (SDPETILVDT…YLEEVPKEES (95 aa)) is the Rhodanese domain. Cys177 serves as the catalytic Cysteine persulfide intermediate. The tract at residues 310 to 330 (LNKQQKQQAKEIARKKAKSEI) is disordered. Positions 317-330 (QAKEIARKKAKSEI) are enriched in basic and acidic residues.

The protein belongs to the TrhO family.

It carries out the reaction uridine(34) in tRNA + AH2 + O2 = 5-hydroxyuridine(34) in tRNA + A + H2O. Catalyzes oxygen-dependent 5-hydroxyuridine (ho5U) modification at position 34 in tRNAs. The polypeptide is tRNA uridine(34) hydroxylase (Francisella philomiragia subsp. philomiragia (strain ATCC 25017 / CCUG 19701 / FSC 153 / O#319-036)).